Consider the following 271-residue polypeptide: ATP synthase subunit a (271 aa).

5 helical membrane-spanning segments follow: residues 38 to 58 (FWTL…LFLV), 100 to 120 (LIAP…LMDL), 146 to 166 (DVNI…FYSI), 220 to 240 (LIFI…LNVP), and 242 to 262 (AIFH…LTIV).

The protein belongs to the ATPase A chain family. In terms of assembly, F-type ATPases have 2 components, CF(1) - the catalytic core - and CF(0) - the membrane proton channel. CF(1) has five subunits: alpha(3), beta(3), gamma(1), delta(1), epsilon(1). CF(0) has three main subunits: a(1), b(2) and c(9-12). The alpha and beta chains form an alternating ring which encloses part of the gamma chain. CF(1) is attached to CF(0) by a central stalk formed by the gamma and epsilon chains, while a peripheral stalk is formed by the delta and b chains.

It localises to the cell inner membrane. In terms of biological role, key component of the proton channel; it plays a direct role in the translocation of protons across the membrane. The chain is ATP synthase subunit a from Salmonella choleraesuis (strain SC-B67).